The chain runs to 557 residues: Putative inactive polypeptide N-acetylgalactosaminyltransferase 11 (557 aa).

The Cytoplasmic portion of the chain corresponds to 1–4; the sequence is MKSL. Residues 5 to 27 form a helical; Signal-anchor for type II membrane protein membrane-spanning segment; it reads LFGTPCSCAIFILVYCIITLFIW. Residues 28-557 lie on the Lumenal side of the membrane; it reads FLYTDNLSNA…MRDICLSVNH (530 aa). Residues Asn33 and Asn103 are each glycosylated (N-linked (GlcNAc...) asparagine). 5 disulfide bridges follow: Cys99/Cys325, Cys316/Cys397, Cys437/Cys450, Cys472/Cys486, and Cys511/Cys526. The tract at residues 109-215 is catalytic subdomain A; that stretch reads TVTVSIVIAI…RGWLPPLLEP (107 aa). Asn220 carries N-linked (GlcNAc...) asparagine glycosylation. Residues 271 to 333 are catalytic subdomain B; sequence PYPSSQLEGR…PCSRVGIIYK (63 aa). Residue Asn379 is glycosylated (N-linked (GlcNAc...) asparagine). Residues 456–557 enclose the Ricin B-type lectin domain; the sequence is EDWTLTSRCQ…MRDICLSVNH (102 aa).

It belongs to the glycosyltransferase 2 family. GalNAc-T subfamily.

It is found in the golgi apparatus membrane. Its function is as follows. Probable inactive glycosyltransferase. This chain is Putative inactive polypeptide N-acetylgalactosaminyltransferase 11, found in Drosophila melanogaster (Fruit fly).